Consider the following 445-residue polypeptide: uncharacterized protein (445 aa).

The next 8 membrane-spanning stretches (helical) occupy residues 16–36 (IVSL…AFLI), 52–72 (LLAS…GYLL), 98–118 (VHSL…AGGC), 168–188 (GLMF…LGIV), 219–239 (ASAL…VWLI), 243–263 (GWSV…GALG), 283–303 (LIAA…NEGS), and 366–386 (AAYP…VPLV). The segment at 417 to 445 (AWPNGPRRPGPPGQPRRVRQGGTAITPPT) is disordered.

The protein belongs to the major facilitator superfamily.

It localises to the cell membrane. This is an uncharacterized protein from Mycobacterium tuberculosis (strain ATCC 25618 / H37Rv).